The chain runs to 174 residues: uncharacterized protein (174 aa).

Positions 137-174 (TNVTLGDDTPKSYDAPVSAIPPPATATTANATGVKPLE) are disordered.

This is an uncharacterized protein from Acanthamoeba polyphaga (Amoeba).